The primary structure comprises 350 residues: ATPase GET3 (350 aa).

An ATP-binding site is contributed by 26–33; the sequence is KGGVGKTT. Aspartate 57 is an active-site residue. Glutamate 241 and asparagine 268 together coordinate ATP. 2 residues coordinate Zn(2+): cysteine 281 and cysteine 284.

Belongs to the arsA ATPase family. As to quaternary structure, homodimer. Component of the Golgi to ER traffic (GET) complex, which is composed of GET1, GET2 and GET3. Within the complex, GET1 and GET2 form a heterotetramer which is stabilized by phosphatidylinositol binding and which binds to the GET3 homodimer. Interacts with the chloride channel protein GEF1.

The protein resides in the cytoplasm. It is found in the endoplasmic reticulum. It localises to the golgi apparatus. Functionally, ATPase required for the post-translational delivery of tail-anchored (TA) proteins to the endoplasmic reticulum. Recognizes and selectively binds the transmembrane domain of TA proteins in the cytosol. This complex then targets to the endoplasmic reticulum by membrane-bound receptors GET1 and GET2, where the tail-anchored protein is released for insertion. This process is regulated by ATP binding and hydrolysis. ATP binding drives the homodimer towards the closed dimer state, facilitating recognition of newly synthesized TA membrane proteins. ATP hydrolysis is required for insertion. Subsequently, the homodimer reverts towards the open dimer state, lowering its affinity for the GET1-GET2 receptor, and returning it to the cytosol to initiate a new round of targeting. Cooperates with the HDEL receptor ERD2 to mediate the ATP-dependent retrieval of resident ER proteins that contain a C-terminal H-D-E-L retention signal from the Golgi to the ER. Involved in low-level resistance to the oxyanions arsenite and arsenate, and in heat tolerance. In Candida glabrata (strain ATCC 2001 / BCRC 20586 / JCM 3761 / NBRC 0622 / NRRL Y-65 / CBS 138) (Yeast), this protein is ATPase GET3.